The primary structure comprises 385 residues: Putative F-box protein At1g47765 (385 aa).

The segment covering 1 to 19 (MEQQKQKKRKVVSKSKRTQ) has biased composition (basic residues). Positions 1 to 24 (MEQQKQKKRKVVSKSKRTQSKSAS) are disordered. In terms of domain architecture, F-box spans 20 to 69 (SKSASSLPLDLTSEILLRLPEKSIARFRCVSKLWLSITTDPYFINLFETR).

This chain is Putative F-box protein At1g47765, found in Arabidopsis thaliana (Mouse-ear cress).